Consider the following 315-residue polypeptide: Ester hydrolase C11orf54 homolog (315 aa).

Residues H266, H268, and H278 each contribute to the Zn(2+) site.

As to quaternary structure, monomer. The cofactor is Zn(2+).

It is found in the nucleus. The protein localises to the cytoplasm. Functionally, exhibits ester hydrolase activity on the substrate p-nitrophenyl acetate, in vitro. Regulates DNA damage and repair by regulating HIF1A degradation via chaperone-mediated autophagy (CMA). The protein is Ester hydrolase C11orf54 homolog of Rattus norvegicus (Rat).